Reading from the N-terminus, the 213-residue chain is Peptidoglycan-N-acetylglucosamine deacetylase BC_3618 (213 aa).

The 182-residue stretch at 22 to 203 (KIIAITFDDG…ELKKQGYRFV (182 aa)) folds into the NodB homology domain. Residue Asp29 is the Proton acceptor of the active site. Positions 30, 80, and 84 each coordinate Zn(2+). The active-site Proton donor is His175.

This sequence belongs to the polysaccharide deacetylase family. The cofactor is Zn(2+).

It catalyses the reaction peptidoglycan-N-acetyl-D-glucosamine + H2O = peptidoglycan-D-glucosamine + acetate.. With respect to regulation, inhibited by CuCl(2) and ZnCl(2). Catalyzes the deacetylation of N-acetylglucosamine (GlcNAc) residues in peptidoglycan. Also acts on soluble chitin substrates and N-acetylchitooligomers. Acts on cell wall peptidoglycan from the Gram-positive bacteria B.cereus and B.subtilis and the Gram-negative bacterium H.pylori. Not active on acetylated xylan. This chain is Peptidoglycan-N-acetylglucosamine deacetylase BC_3618, found in Bacillus cereus (strain ATCC 14579 / DSM 31 / CCUG 7414 / JCM 2152 / NBRC 15305 / NCIMB 9373 / NCTC 2599 / NRRL B-3711).